The following is a 592-amino-acid chain: Bifunctional purine biosynthesis protein ATIC (592 aa).

M1 carries the N-acetylmethionine modification. Positions 2-146 (APGQLALFSV…KNHARVTVVC (145 aa)) constitute an MGS-like domain. Residues 2–198 (APGQLALFSV…ISDYFRKQYS (197 aa)) are IMP cyclohydrolase. IMP is bound by residues 12-14 (SDK), 34-37 (SGGT), 64-67 (RVKT), 101-102 (CN), and 125-126 (DI). K137 acts as the Proton donor/acceptor; for FAICAR cyclization activity in catalysis. Position 199 is an N6-acetyllysine (K199). Residues 199–592 (KGVSQMPLRY…AHTNLRLFHH (394 aa)) form an AICAR formyltransferase region. 5-amino-1-(5-phospho-beta-D-ribosyl)imidazole-4-carboxamide is bound by residues 207–208 (RY), H267, G316, D339, N431, and R451. H267 functions as the Proton acceptor; for AICAR formyltransferase activity in the catalytic mechanism. (6R)-10-formyltetrahydrofolate is bound at residue I452. 5-amino-1-(5-phospho-beta-D-ribosyl)imidazole-4-carboxamide is bound at residue F541. (6R)-10-formyltetrahydrofolate contacts are provided by residues D546 and 565–566 (SA). Residue R588 participates in 5-amino-1-(5-phospho-beta-D-ribosyl)imidazole-4-carboxamide binding.

It belongs to the PurH family. Homodimer. Associates with internalized INSR complexes on Golgi/endosomal membranes. Interacts with INSR; ATIC together with PRKAA2/AMPK2 and HACD3/PTPLAD1 is proposed to be part of a signaling network regulating INSR autophosphorylation and endocytosis. As to expression, present in the heart, brain, placenta, lung, liver, skeletal muscle, kidney, pancreas.

The protein resides in the cytoplasm. It is found in the cytosol. It carries out the reaction (6R)-10-formyltetrahydrofolate + 5-amino-1-(5-phospho-beta-D-ribosyl)imidazole-4-carboxamide = 5-formamido-1-(5-phospho-D-ribosyl)imidazole-4-carboxamide + (6S)-5,6,7,8-tetrahydrofolate. It catalyses the reaction 10-formyldihydrofolate + 5-amino-1-(5-phospho-beta-D-ribosyl)imidazole-4-carboxamide = 5-formamido-1-(5-phospho-D-ribosyl)imidazole-4-carboxamide + 7,8-dihydrofolate. The catalysed reaction is IMP + H2O = 5-formamido-1-(5-phospho-D-ribosyl)imidazole-4-carboxamide. The enzyme catalyses 5-amino-1-(5-phospho-D-ribosyl)imidazole-4-thiocarboxamide + 10-formyldihydrofolate = 6-thio-IMP + 7,8-dihydrofolate + H2O. It participates in purine metabolism; IMP biosynthesis via de novo pathway; 5-formamido-1-(5-phospho-D-ribosyl)imidazole-4-carboxamide from 5-amino-1-(5-phospho-D-ribosyl)imidazole-4-carboxamide (10-formyl THF route): step 1/1. It functions in the pathway purine metabolism; IMP biosynthesis via de novo pathway; IMP from 5-formamido-1-(5-phospho-D-ribosyl)imidazole-4-carboxamide: step 1/1. With respect to regulation, AMP and XMP inhibit AICAR formyltransferase activity. AICAR formyltransferase activity is inhibited by N-(6-fluoro-1-oxo-1,2-dihydroisoquinolin-7-yl)-5- [(3R)-3-hydroxypyrrolidin-1-yl]thiophene-2-sulfonamide (LSN 3213128), which acts as a tumor suppression in cancer cell lines. Functionally, bifunctional enzyme that catalyzes the last two steps of purine biosynthesis. Acts as a transformylase that incorporates a formyl group to the AMP analog AICAR (5-amino-1-(5-phospho-beta-D-ribosyl)imidazole-4-carboxamide) to produce the intermediate formyl-AICAR (FAICAR). Can use both 10-formyldihydrofolate and 10-formyltetrahydrofolate as the formyl donor in this reaction. Also catalyzes the cyclization of FAICAR to inosine monophosphate (IMP). Is able to convert thio-AICAR to 6-mercaptopurine ribonucleotide, an inhibitor of purine biosynthesis used in the treatment of human leukemias. Promotes insulin receptor/INSR autophosphorylation and is involved in INSR internalization. The chain is Bifunctional purine biosynthesis protein ATIC from Homo sapiens (Human).